We begin with the raw amino-acid sequence, 61 residues long: Large ribosomal subunit protein uL30 (61 aa).

The protein belongs to the universal ribosomal protein uL30 family. In terms of assembly, part of the 50S ribosomal subunit.

The sequence is that of Large ribosomal subunit protein uL30 from Fervidobacterium nodosum (strain ATCC 35602 / DSM 5306 / Rt17-B1).